Consider the following 219-residue polypeptide: Interleukin-12 subunit alpha (219 aa).

The first 22 residues, 1–22 (MCPARSLLLVATLVLLDYLSLA), serve as a signal peptide directing secretion. Residues asparagine 24, asparagine 93, and asparagine 107 are each glycosylated (N-linked (GlcNAc...) asparagine). 3 cysteine pairs are disulfide-bonded: cysteine 37/cysteine 110, cysteine 64/cysteine 196, and cysteine 85/cysteine 123.

Belongs to the IL-6 superfamily. Heterodimer with IL12B; disulfide-linked. This heterodimer is known as interleukin IL-12. Heterodimer with EBI3/IL27B; not disulfide-linked. This heterodimer is known as interleukin IL-35. Interacts with NBR1; this interaction promotes IL-12 secretion.

The protein localises to the secreted. In terms of biological role, heterodimerizes with IL12B to form the IL-12 cytokine or with EBI3/IL27B to form the IL-35 cytokine. IL-12 is primarily produced by professional antigen-presenting cells (APCs) such as B-cells and dendritic cells (DCs) as well as macrophages and granulocytes and regulates T-cell and natural killer-cell responses, induces the production of interferon-gamma (IFN-gamma), favors the differentiation of T-helper 1 (Th1) cells and is an important link between innate resistance and adaptive immunity. Mechanistically, exerts its biological effects through a receptor composed of IL12R1 and IL12R2 subunits. Binding to the receptor results in the rapid tyrosine phosphorylation of a number of cellular substrates including the JAK family kinases TYK2 and JAK2. In turn, recruited STAT4 gets phosphorylated and translocates to the nucleus where it regulates cytokine/growth factor responsive genes. As part of IL-35, plays essential roles in maintaining the immune homeostasis of the liver microenvironment and also functions as an immune-suppressive cytokine. Mediates biological events through unconventional receptors composed of IL12RB2 and gp130/IL6ST heterodimers or homodimers. Signaling requires the transcription factors STAT1 and STAT4, which form a unique heterodimer that binds to distinct DNA sites. The polypeptide is Interleukin-12 subunit alpha (IL12A) (Cercocebus atys (Sooty mangabey)).